Here is a 304-residue protein sequence, read N- to C-terminus: HPr kinase/phosphorylase (304 aa).

Catalysis depends on residues H136 and K157. 151-158 provides a ligand contact to ATP; the sequence is GESGIGKS. Residue S158 coordinates Mg(2+). D175 serves as the catalytic Proton acceptor; for phosphorylation activity. Proton donor; for dephosphorylation activity. An important for the catalytic mechanism of both phosphorylation and dephosphorylation region spans residues 198 to 207; that stretch reads LEVRGIGIID. E199 is a binding site for Mg(2+). The active site involves R240. The important for the catalytic mechanism of dephosphorylation stretch occupies residues 261–266; the sequence is PVRPGR.

Belongs to the HPrK/P family. Homohexamer. It depends on Mg(2+) as a cofactor.

It carries out the reaction [HPr protein]-L-serine + ATP = [HPr protein]-O-phospho-L-serine + ADP + H(+). The enzyme catalyses [HPr protein]-O-phospho-L-serine + phosphate + H(+) = [HPr protein]-L-serine + diphosphate. Catalyzes the ATP- as well as the pyrophosphate-dependent phosphorylation of a specific serine residue in HPr, a phosphocarrier protein of the phosphoenolpyruvate-dependent sugar phosphotransferase system (PTS). HprK/P also catalyzes the pyrophosphate-producing, inorganic phosphate-dependent dephosphorylation (phosphorolysis) of seryl-phosphorylated HPr (P-Ser-HPr). The two antagonistic activities of HprK/P are regulated by several intracellular metabolites, which change their concentration in response to the absence or presence of rapidly metabolisable carbon sources (glucose, fructose, etc.) in the growth medium. Therefore, by controlling the phosphorylation state of HPr, HPrK/P is a sensor enzyme that plays a major role in the regulation of carbon metabolism and sugar transport: it mediates carbon catabolite repression (CCR), and regulates PTS-catalyzed carbohydrate uptake and inducer exclusion. The sequence is that of HPr kinase/phosphorylase from Clostridium botulinum (strain Eklund 17B / Type B).